We begin with the raw amino-acid sequence, 133 residues long: MAYRKMLKSKIHRACVTQADLDYEGSITISPELLKVANILPYEAVNVWNITAGTRFETYAITGEKGSTDICVNGAAAHLVTPGDLVIIASFTQILEEDCAAHEPTVVFVDQFNRLKEIRPERIGVKSRIPNPA.

The active-site Schiff-base intermediate with substrate; via pyruvic acid is the Ser-26. The residue at position 26 (Ser-26) is a Pyruvic acid (Ser). Residue Thr-58 coordinates substrate. Tyr-59 functions as the Proton donor in the catalytic mechanism. A substrate-binding site is contributed by 74-76 (GAA).

The protein belongs to the PanD family. As to quaternary structure, heterooctamer of four alpha and four beta subunits. The cofactor is pyruvate. Post-translationally, is synthesized initially as an inactive proenzyme, which is activated by self-cleavage at a specific serine bond to produce a beta-subunit with a hydroxyl group at its C-terminus and an alpha-subunit with a pyruvoyl group at its N-terminus.

The protein localises to the cytoplasm. The enzyme catalyses L-aspartate + H(+) = beta-alanine + CO2. Its pathway is cofactor biosynthesis; (R)-pantothenate biosynthesis; beta-alanine from L-aspartate: step 1/1. In terms of biological role, catalyzes the pyruvoyl-dependent decarboxylation of aspartate to produce beta-alanine. In Legionella pneumophila subsp. pneumophila (strain Philadelphia 1 / ATCC 33152 / DSM 7513), this protein is Aspartate 1-decarboxylase.